A 78-amino-acid chain; its full sequence is Delta-conotoxin TxVIA (78 aa).

Positions 1 to 22 are cleaved as a signal peptide; the sequence is MKLTCMMIVAVLFLTAWTFATA. Positions 23–49 are excised as a propeptide; sequence DDPRNGLGNLFSNAHHEMKNPEASKLN. 3 disulfides stabilise this stretch: C53–C68, C60–C72, and C67–C77. Methionine sulfoxide; partial is present on M59.

The protein belongs to the conotoxin O1 superfamily. In terms of tissue distribution, expressed by the venom duct.

It localises to the secreted. Delta-conotoxins bind to site 6 of voltage-gated sodium channels (Nav) and inhibit the inactivation process. Binding of this toxin is strongly calcium-dependent but not voltage-dependent. The binding site is most likely on the extracellular side of the sodium channel. Binds receptor sites on both mollusk and rat central nervous system, but despite its high affinity binding to rat sodium channel, it has no functional effect in vivo and in vitro on it. Also has no effect on Gambusia fish. Is important in mollusk for the paralysis of the prey. Upon injection of the peptide, a subordinate lobster assumes an exaggerated dominant posture (of a 'King-Kong' lobster!). The protein is Delta-conotoxin TxVIA of Conus textile (Cloth-of-gold cone).